The following is a 308-amino-acid chain: GTPase IMAP family member 5 (308 aa).

Residues 1 to 283 (MEHLQKSTYG…VKSCWSSHTA (283 aa)) are Cytoplasmic-facing. Residues 24–227 (SSCLRILLVG…HSNDLFLHAE (204 aa)) enclose the AIG1-type G domain. Residues 33 to 41 (GKSGCGKSA), S54, 151 to 153 (RKE), and N188 contribute to the GTP site. Residues 284–304 (ACALLIVLGLTLLTTFINLCI) traverse the membrane as a helical; Anchor for type IV membrane protein segment. Topologically, residues 305 to 308 (SRCK) are mitochondrial intermembrane.

The protein belongs to the TRAFAC class TrmE-Era-EngA-EngB-Septin-like GTPase superfamily. AIG1/Toc34/Toc159-like paraseptin GTPase family. IAN subfamily. As to quaternary structure, interacts with BAD, BAK1, BAX, BCL2, BCL2L1/Bcl-xL and BCL2L11/BimEL. The interaction with BAX is increased, when cells initiate apoptosis upon IL2 withdrawal. Forms a complex with BCL2L1 or MCL1 and HSPA8/HSC70; the interaction between HSPA8 and BCL2L1 or MCL1 is impaired in the absence of GIMAP5. May interact (via N-terminus) with microtubules. As to expression, expressed in thymus (in thymocytes), spleen (in splenocytes), lymph node and lung. Highly expressed in T lymphocytes. Expressed in B cells and in distinct lineages of hematopoietic bone marrow cells, including natural killer, B, T, myeloid and erythroid lineages. Expressed in liver endothelial cells.

The protein resides in the lysosome. The protein localises to the lysosome membrane. It localises to the endosome. It is found in the multivesicular body membrane. Its subcellular location is the endosome membrane. Plays a role in T lymphocyte development and the optimal generation of CD4/CD8 double-positive thymocytes. Inhibitor of GSK3A. May act by sequestering GSK3A in cytoplasmic vesicles and impairing its translocation to the nucleus. Consequently, impairs GSK3A-dependent transcriptional program and regulation of the DNA damage response occurring during T cells proliferation. Required for the survival of bone marrow hematopoietic stem cells, as well as of peripheral T cells, natural killer (NK) and NK T-cell development and the maintenance of normal liver function. May promote the survival of mature T lymphocytes upon cytokine withdrawal. May regulate Ca(2+) homeostasis by modulating lysosomal Ca(2+) stores, preventing its accumulation in the absence of T cell activation. May play a role in mitochondrial DNA segregation in hematopoietic tissues. Is a regulator of liver endothelial cell homeostasis. This Mus musculus (Mouse) protein is GTPase IMAP family member 5 (Gimap5).